We begin with the raw amino-acid sequence, 37 residues long: Potassium channel toxin alpha-KTx 1.13 (37 aa).

Position 1 is a pyrrolidone carboxylic acid (glutamine 1). Disulfide bonds link cysteine 7–cysteine 28, cysteine 13–cysteine 33, and cysteine 17–cysteine 35. Residues 26-33 (GKCMNKKC) form an interaction with Ca(2+)-activated K(+) channels region.

Belongs to the short scorpion toxin superfamily. Potassium channel inhibitor family. Alpha-KTx 01 subfamily. In terms of tissue distribution, expressed by the venom gland.

Its subcellular location is the secreted. Its function is as follows. Potent selective inhibitor of high conductance (maxi-K), different medium and small conductance calcium-activated potassium channels (KCa1.1/KCNMA1 and others), as well as a voltage-dependent potassium channel (Kv1.3/KCNA3&gt;Kv1.2/KCNA2&gt;Kv1.6/KCNA3&gt;&gt;Shaker/Sh). It blocks channel activity by a simple bimolecular inhibition process. Functionally, has a pH-specific antimicrobial activity against bacteria (B.subtilis, E.coli and S.aureus) and the fungus C.albicans. The chain is Potassium channel toxin alpha-KTx 1.13 from Leiurus hebraeus (Hebrew deathstalker scorpion).